The primary structure comprises 268 residues: Putative sgc region protein SgcQ (268 aa).

This sequence belongs to the BtpA family.

In Escherichia coli (strain K12), this protein is Putative sgc region protein SgcQ (sgcQ).